We begin with the raw amino-acid sequence, 297 residues long: MAPSQLPAIFNPTSQDIEQLLAAQCHLGSKNLQVHMEPYLWKTRPDGINVINIGKTWEKIVLAARIIAAIDNPADICVISARPYGQRAVLKFAAHTGAVAIAGRFTPGNFTNYITRSFKEPRLIIVTDPRTDAQAIKEASYVNIPVIALCDTDSPTEFVDVAIPTNNKGRHSIGLVWWMLAREVLRLRGSIASREAEWDTMVDLYFYRDPEAEENKDAIEEAKAPGADEVGAAAVDQGFAGTGDWEVSGATAGAFTAASNTAAAGGASWDAAEPSDWAATPAAAGQEWAASGATEQW.

The segment at 266 to 297 is disordered; it reads GASWDAAEPSDWAATPAAAGQEWAASGATEQW. Residues 282–297 show a composition bias toward low complexity; it reads AAAGQEWAASGATEQW.

The protein belongs to the universal ribosomal protein uS2 family. As to quaternary structure, component of the small ribosomal subunit. Mature ribosomes consist of a small (40S) and a large (60S) subunit. The 40S subunit contains about 33 different proteins and 1 molecule of RNA (18S). The 60S subunit contains about 49 different proteins and 3 molecules of RNA (25S, 5.8S and 5S). Interacts with rps21.

It is found in the cytoplasm. Required for the assembly and/or stability of the 40S ribosomal subunit. Required for the processing of the 20S rRNA-precursor to mature 18S rRNA in a late step of the maturation of 40S ribosomal subunits. The polypeptide is Small ribosomal subunit protein uS2 (rps0) (Sclerotinia sclerotiorum (strain ATCC 18683 / 1980 / Ss-1) (White mold)).